A 176-amino-acid chain; its full sequence is Ribosome rescue factor SmrB (176 aa).

The Smr domain maps to 93-168 (LDLHGYRQSE…GDAALLVLID (76 aa)).

This sequence belongs to the SmrB family. Associates with collided ribosomes, but not with correctly translating polysomes.

In terms of biological role, acts as a ribosome collision sensor. Detects stalled/collided disomes (pairs of ribosomes where the leading ribosome is stalled and a second ribosome has collided with it) and endonucleolytically cleaves mRNA at the 5' boundary of the stalled ribosome. Stalled/collided disomes form a new interface (primarily via the 30S subunits) that binds SmrB. Cleaved mRNA becomes available for tmRNA ligation, leading to ribosomal subunit dissociation and rescue of stalled ribosomes. This chain is Ribosome rescue factor SmrB, found in Shewanella oneidensis (strain ATCC 700550 / JCM 31522 / CIP 106686 / LMG 19005 / NCIMB 14063 / MR-1).